Reading from the N-terminus, the 255-residue chain is Glycine-rich protein DOT1 (255 aa).

Residues methionine 1–alanine 21 form the signal peptide. The tract at residues glycine 63–histidine 88 is disordered.

In terms of tissue distribution, expressed in emerging leaf primordia and young leaves.

The protein resides in the secreted. Functionally, involved in leaf vasculature patterning. The polypeptide is Glycine-rich protein DOT1 (Arabidopsis thaliana (Mouse-ear cress)).